The following is a 399-amino-acid chain: Phosphoprotein (399 aa).

Polar residues-rich tracts occupy residues 30–46 (ATSQSSLNKPPSQSSRT) and 82–112 (GRQNLDSLSMISNKPQTGTLLMGSDTQLPSP). Positions 30–112 (ATSQSSLNKP…MGSDTQLPSP (83 aa)) are disordered. The segment at 224 to 287 (NYASEILDAI…ITTMKIMDPG (64 aa)) is multimerization. A coiled-coil region spans residues 226–253 (ASEILDAIKALEVRLDRIEGKVDKIMLT).

This sequence belongs to the rubulavirus/avulavirus P protein family. Homotetramer. Interacts (via multimerization domain) with polymerase L; this interaction forms the polymerase L-P complex. Interacts (via N-terminus) with N0 (via Ncore); this interaction allows P to chaperon N0 to avoid N polymerization before encapsidation. Interacts (via C-terminus) with N-RNA template; this interaction positions the polymerase on the template for both transcription and replication.

In terms of biological role, essential cofactor of the RNA polymerase L that plays a central role in the transcription and replication by forming the polymerase complex with RNA polymerase L and recruiting L to the genomic N-RNA template for RNA synthesis. Also plays a central role in the encapsidation of nascent RNA chains by forming the encapsidation complex with the nucleocapsid protein N (N-P complex). Acts as a chaperone for newly synthesized free N protein, so-called N0, allowing encapsidation of nascent RNA chains during replication. The nucleoprotein protein N prevents excessive phosphorylation of P, which leads to down-regulation of viral transcription/ replication. Participates, together with N, in the formation of viral factories (viroplasms), which are large inclusions in the host cytoplasm where replication takes place. The polypeptide is Phosphoprotein (P/V) (Human parainfluenza 4a virus (strain Toshiba) (HPIV-4a)).